Reading from the N-terminus, the 37-residue chain is Protein YhiY (37 aa).

In Escherichia coli (strain K12), this protein is Protein YhiY.